A 772-amino-acid polypeptide reads, in one-letter code: DNA ligase (772 aa).

NAD(+) contacts are provided by residues 80-84, 130-131, and E160; these read DAEYD and SL. Residue K162 is the N6-AMP-lysine intermediate of the active site. Residues R183, E220, K336, and K360 each coordinate NAD(+). Zn(2+) is bound by residues C454, C457, C473, and C479. Residues 685–772 form the BRCT domain; sequence APEQTLEGLT…NGPQGITTIG (88 aa).

It belongs to the NAD-dependent DNA ligase family. LigA subfamily. It depends on Mg(2+) as a cofactor. The cofactor is Mn(2+).

It catalyses the reaction NAD(+) + (deoxyribonucleotide)n-3'-hydroxyl + 5'-phospho-(deoxyribonucleotide)m = (deoxyribonucleotide)n+m + AMP + beta-nicotinamide D-nucleotide.. Its function is as follows. DNA ligase that catalyzes the formation of phosphodiester linkages between 5'-phosphoryl and 3'-hydroxyl groups in double-stranded DNA using NAD as a coenzyme and as the energy source for the reaction. It is essential for DNA replication and repair of damaged DNA. The chain is DNA ligase from Cutibacterium acnes (strain DSM 16379 / KPA171202) (Propionibacterium acnes).